A 341-amino-acid chain; its full sequence is MYTLARQLLFKLSPETSHDLSLDLIGAGGRLGLNGLVCKAPAKVPVSVMGLDFPNPVGLAAGLDKNGAAIDGFAQLGFGFVEIGTVTPRPQPGNPKPRIFRLPEAEAIINRMGFNNLGVDHLLSRVQAAKYQGILGINIGKNFDTPVERAVDDYLICLDKVYAHASYVTVNVSSPNTPGLRSLQFGDSLKQLLEALRQRQEDLAVRHGKRVPLAIKIAPDMSDEETVLVAQALVDSGMDAVIATNTTLSRVGVEGLAHGDEAGGLSGAPVRDKSTHIVKVLAAELAGRLPIIAVGGITEGKHAAEKIAAGASLVQLYSGFIYKGPALIRQSVDAIAALPKA.

Residues 61 to 65 (AGLDK) and Thr85 each bind FMN. Residue Lys65 coordinates substrate. 110–114 (NRMGF) lines the substrate pocket. 2 residues coordinate FMN: Asn138 and Asn171. Asn171 serves as a coordination point for substrate. The active-site Nucleophile is the Ser174. Substrate is bound at residue Asn176. Lys216 and Thr244 together coordinate FMN. A substrate-binding site is contributed by 245 to 246 (NT). Residues Gly267, Gly296, and 317-318 (YS) contribute to the FMN site.

This sequence belongs to the dihydroorotate dehydrogenase family. Type 2 subfamily. Monomer. The cofactor is FMN.

It localises to the cell membrane. The catalysed reaction is (S)-dihydroorotate + a quinone = orotate + a quinol. It participates in pyrimidine metabolism; UMP biosynthesis via de novo pathway; orotate from (S)-dihydroorotate (quinone route): step 1/1. In terms of biological role, catalyzes the conversion of dihydroorotate to orotate with quinone as electron acceptor. This Pseudomonas fluorescens (strain SBW25) protein is Dihydroorotate dehydrogenase (quinone).